The chain runs to 293 residues: Carbapenem-hydrolyzing beta-lactamase KPC (293 aa).

The first 24 residues, 1 to 24, serve as a signal peptide directing secretion; that stretch reads MSLYRRLVLLSCLSWPLAGFSATA. The Acyl-ester intermediate role is filled by Ser-69. Residue Glu-167 is the Proton acceptor of the active site. 233–235 contacts substrate; it reads KTG.

It belongs to the class-A beta-lactamase family.

The enzyme catalyses a beta-lactam + H2O = a substituted beta-amino acid. With respect to regulation, not inhibited by EDTA, inhibited by clavulanic acid and tazobactam. Functionally, hydrolyzes carbapenems, penicillins, cephalosporins and aztreonam with varying efficiency. This is Carbapenem-hydrolyzing beta-lactamase KPC (bla) from Klebsiella oxytoca.